A 24-amino-acid polypeptide reads, in one-letter code: AFANTGVEIVSIDTYLFSLYDEDK.

The protein belongs to the glycosyl hydrolase 17 family. In terms of processing, the N-terminus is blocked.

The chain is Major pollen allergen Ole e 4 from Olea europaea (Common olive).